Here is a 593-residue protein sequence, read N- to C-terminus: Methionine--tRNA ligase, mitochondrial (593 aa).

The transit peptide at 1–29 directs the protein to the mitochondrion; it reads MLRVSAFRLLGRRGASRVSLLEDFSFRYY. A 'HIGH' region motif is present at residues 52 to 62; sequence FYVNAAPHIGH. The short motif at 347–351 is the 'KMSKS' region element; that stretch reads KMSKS. Residue Lys350 participates in ATP binding.

The protein belongs to the class-I aminoacyl-tRNA synthetase family.

It is found in the mitochondrion matrix. The catalysed reaction is tRNA(Met) + L-methionine + ATP = L-methionyl-tRNA(Met) + AMP + diphosphate. In Bos taurus (Bovine), this protein is Methionine--tRNA ligase, mitochondrial (MARS2).